The sequence spans 64 residues: Large ribosomal subunit protein bL35 (64 aa).

It belongs to the bacterial ribosomal protein bL35 family.

In Carboxydothermus hydrogenoformans (strain ATCC BAA-161 / DSM 6008 / Z-2901), this protein is Large ribosomal subunit protein bL35.